A 251-amino-acid polypeptide reads, in one-letter code: Uridylate kinase (251 aa).

19-22 (KLSG) contacts ATP. G61 serves as a coordination point for UMP. Residues G62 and R66 each coordinate ATP. UMP-binding positions include D81 and 142-149 (IGNPFFTT). 4 residues coordinate ATP: T169, Q170, Y175, and D178.

Belongs to the UMP kinase family. As to quaternary structure, homohexamer.

The protein localises to the cytoplasm. The enzyme catalyses UMP + ATP = UDP + ADP. Its pathway is pyrimidine metabolism; CTP biosynthesis via de novo pathway; UDP from UMP (UMPK route): step 1/1. With respect to regulation, inhibited by UTP. In terms of biological role, catalyzes the reversible phosphorylation of UMP to UDP. This Hyphomonas neptunium (strain ATCC 15444) protein is Uridylate kinase.